Here is a 516-residue protein sequence, read N- to C-terminus: Replication factor C large subunit (516 aa).

44–51 (GAPGVGKT) is a binding site for ATP. Residues 421 to 516 (RSEAVEAHAG…DGQAGLSEFM (96 aa)) are disordered. Residues 454–467 (VQSHKSAESGDDTV) show a composition bias toward basic and acidic residues. Residues 479–496 (QSGASETASATESASDSD) show a composition bias toward low complexity. The span at 497-508 (ASTDTDADDDDG) shows a compositional bias: acidic residues.

It belongs to the activator 1 small subunits family. RfcL subfamily. In terms of assembly, heteromultimer composed of small subunits (RfcS) and large subunits (RfcL).

Functionally, part of the RFC clamp loader complex which loads the PCNA sliding clamp onto DNA. The protein is Replication factor C large subunit of Haloquadratum walsbyi (strain DSM 16790 / HBSQ001).